Reading from the N-terminus, the 1063-residue chain is JmjC domain-containing histone demethylation protein 1 (1063 aa).

Residues Leu-86–Asn-266 form the JmjC domain. Thr-160 serves as a coordination point for substrate. His-163 and Asp-165 together coordinate Fe cation. Lys-180 contributes to the substrate binding site. Position 234 (His-234) interacts with Fe cation. Positions Gly-379–Val-389 are enriched in acidic residues. Disordered stretches follow at residues Gly-379–Arg-400, Glu-554–Asn-750, and Val-776–Lys-1040. The span at Lys-390–Arg-400 shows a compositional bias: basic and acidic residues. 2 stretches are compositionally biased toward acidic residues: residues Pro-594 to Pro-605 and Glu-613 to Tyr-631. Residues Thr-636–Ser-646 show a composition bias toward low complexity. Basic and acidic residues-rich tracts occupy residues Thr-647–Glu-665, Glu-674–Ala-712, Val-776–Ser-806, Pro-813–Arg-835, and Glu-892–Ser-902. Residues Ala-926–Ser-937 show a composition bias toward low complexity. Composition is skewed to polar residues over residues Leu-950–Tyr-963 and Trp-973–Arg-982. Residues Pro-1005 to Val-1016 show a composition bias toward pro residues. Residues Glu-1020 to Ser-1030 are compositionally biased toward polar residues. Residues Asn-1031 to Lys-1040 are compositionally biased toward basic and acidic residues.

Belongs to the JHDM1 histone demethylase family. Fe(2+) is required as a cofactor.

Its subcellular location is the nucleus. It carries out the reaction N(6),N(6)-dimethyl-L-lysyl(36)-[histone H3] + 2 2-oxoglutarate + 2 O2 = L-lysyl(36)-[histone H3] + 2 formaldehyde + 2 succinate + 2 CO2. In terms of biological role, histone demethylase that specifically demethylates 'Lys-36' of histone H3, thereby playing a central role in histone code. This is JmjC domain-containing histone demethylation protein 1 (jhdm-1) from Caenorhabditis briggsae.